The following is a 268-amino-acid chain: TATA-box-binding protein (268 aa).

A compositionally biased stretch (polar residues) spans 1-24 (MDSLTTHPATAQQARAFTSPSSLS). The segment at 1 to 86 (MDSLTTHPAT…TPAATPGASA (86 aa)) is disordered. Low complexity predominate over residues 50–86 (NGQSANGNVNGQQQGANAANGNGVMPATPAATPGASA). 2 tandem repeats follow at residues 95 to 171 (LQNI…ARII) and 185 to 262 (IQNI…YPVL).

The protein belongs to the TBP family. Belongs to the TFIID complex together with the TBP-associated factors (TAFs). Binds DNA as monomer.

It localises to the nucleus. Its function is as follows. General transcription factor that functions at the core of the DNA-binding multiprotein factor TFIID. Binding of TFIID to the TATA box is the initial transcriptional step of the pre-initiation complex (PIC), playing a role in the activation of eukaryotic genes transcribed by RNA polymerase II. The protein is TATA-box-binding protein (tbpA) of Emericella nidulans (strain FGSC A4 / ATCC 38163 / CBS 112.46 / NRRL 194 / M139) (Aspergillus nidulans).